A 407-amino-acid chain; its full sequence is Nuclear hormone receptor family member nhr-134 (407 aa).

The NR C4-type zinc finger occupies Cys-11–Cys-31. An NR C4-type; degenerate zinc finger spans residues Arg-47 to Cys-66. Residues Gln-157–Thr-407 enclose the NR LBD domain.

The protein belongs to the nuclear hormone receptor family.

It is found in the nucleus. Orphan nuclear receptor. This chain is Nuclear hormone receptor family member nhr-134 (nhr-134), found in Caenorhabditis elegans.